We begin with the raw amino-acid sequence, 352 residues long: Selenide, water dikinase (352 aa).

Cysteine 23 is a catalytic residue. ATP contacts are provided by residues lysine 26 and 54-56 (SRD). Aspartate 57 provides a ligand contact to Mg(2+). ATP-binding positions include aspartate 74, aspartate 97, and 145 to 147 (GHS). A Mg(2+)-binding site is contributed by aspartate 97. Aspartate 233 provides a ligand contact to Mg(2+).

The protein belongs to the selenophosphate synthase 1 family. Class I subfamily. In terms of assembly, homodimer. The cofactor is Mg(2+).

The catalysed reaction is hydrogenselenide + ATP + H2O = selenophosphate + AMP + phosphate + 2 H(+). Functionally, synthesizes selenophosphate from selenide and ATP. The chain is Selenide, water dikinase from Shewanella sp. (strain ANA-3).